The chain runs to 133 residues: Transcription antitermination protein NusB (133 aa).

It belongs to the NusB family.

Involved in transcription antitermination. Required for transcription of ribosomal RNA (rRNA) genes. Binds specifically to the boxA antiterminator sequence of the ribosomal RNA (rrn) operons. This Clostridium novyi (strain NT) protein is Transcription antitermination protein NusB.